The primary structure comprises 476 residues: Ribulose bisphosphate carboxylase large chain (476 aa).

A propeptide spanning residues 1–2 (MS) is cleaved from the precursor. An N-acetylproline modification is found at proline 3. Residue lysine 14 is modified to N6,N6,N6-trimethyllysine. Substrate-binding residues include asparagine 123 and threonine 173. Lysine 175 (proton acceptor) is an active-site residue. Lysine 177 is a binding site for substrate. Residues lysine 201, aspartate 203, and glutamate 204 each coordinate Mg(2+). Residue lysine 201 is modified to N6-carboxylysine. Histidine 294 acts as the Proton acceptor in catalysis. 3 residues coordinate substrate: arginine 295, histidine 327, and serine 379.

The protein belongs to the RuBisCO large chain family. Type I subfamily. Heterohexadecamer of 8 large chains and 8 small chains; disulfide-linked. The disulfide link is formed within the large subunit homodimers. Mg(2+) serves as cofactor. In terms of processing, the disulfide bond which can form in the large chain dimeric partners within the hexadecamer appears to be associated with oxidative stress and protein turnover.

The protein resides in the plastid. Its subcellular location is the chloroplast. It carries out the reaction 2 (2R)-3-phosphoglycerate + 2 H(+) = D-ribulose 1,5-bisphosphate + CO2 + H2O. The enzyme catalyses D-ribulose 1,5-bisphosphate + O2 = 2-phosphoglycolate + (2R)-3-phosphoglycerate + 2 H(+). RuBisCO catalyzes two reactions: the carboxylation of D-ribulose 1,5-bisphosphate, the primary event in carbon dioxide fixation, as well as the oxidative fragmentation of the pentose substrate in the photorespiration process. Both reactions occur simultaneously and in competition at the same active site. The sequence is that of Ribulose bisphosphate carboxylase large chain from Zea mays (Maize).